A 2210-amino-acid chain; its full sequence is RNA-directed RNA polymerase L (2210 aa).

The endonuclease stretch occupies residues 26–284; that stretch reads KDAFLSHCHS…KHEDNTTSDC (259 aa). Residues E51, D89, and E102 each contribute to the Mn(2+) site. K115 is an active-site residue. A RdRp catalytic domain is found at 1172–1368; sequence CDMKLAVNNG…YLSSKLNKFV (197 aa). D1330 is a Mg(2+) binding site.

Belongs to the Bunyavirales RNA polymerase family. As to quaternary structure, homomultimer; the oligomeric structure is essential for the polymerase activity. Interacts with nucleoprotein N. Interacts with protein Z; this interaction inhibits viral transcription and replication, Z partially blocks the product exit tunnel for the releasing nascent RNA product. Mn(2+) is required as a cofactor. Mg(2+) serves as cofactor.

It is found in the virion. Its subcellular location is the host cytoplasm. The catalysed reaction is RNA(n) + a ribonucleoside 5'-triphosphate = RNA(n+1) + diphosphate. In terms of biological role, RNA-dependent RNA polymerase, which is responsible for the replication and transcription of the viral RNA genome using antigenomic RNA as an intermediate. During transcription, synthesizes subgenomic RNAs and assures their capping by a cap-snatching mechanism, which involves the endonuclease activity cleaving the host capped pre-mRNAs. These short capped RNAs are then used as primers for viral transcription. The 3'-end of subgenomic mRNAs molecules are heterogeneous and not polyadenylated. The replicase function is to direct synthesis of antigenomic and genomic RNA which are encapsidated and non capped. As a consequence of the use of the same enzyme for both transcription and replication, these mechanisms need to be well coordinated. These processes may be regulated by proteins N and Z in a dose-dependent manner. Z protein inhibits the viral polymerase L und thus the viral transcription and RNA synthesis. In Tacaribe virus (strain Franze-Fernandez) (TCRV), this protein is RNA-directed RNA polymerase L.